Reading from the N-terminus, the 173-residue chain is uncharacterized protein (173 aa).

A propeptide spans 1 to 15 (leader sequence); sequence MERKLSQRAGNTFKG. Phenylalanine 16 is modified (N-methylphenylalanine). The chain crosses the membrane as a helical span at residues 16-37; that stretch reads FTLVEVLITLAIISLVFSLILI.

Its subcellular location is the membrane. This is an uncharacterized protein from Aquifex aeolicus (strain VF5).